A 544-amino-acid chain; its full sequence is L-aspartate oxidase (544 aa).

Residues 17-20 (SGGA), K39, 46-53 (STFYAQGG), and D221 each bind FAD. R288 functions as the Proton donor/acceptor in the catalytic mechanism. Residues E373 and 389 to 390 (SL) each bind FAD.

This sequence belongs to the FAD-dependent oxidoreductase 2 family. NadB subfamily. FAD serves as cofactor.

The protein localises to the cytoplasm. The catalysed reaction is L-aspartate + O2 = iminosuccinate + H2O2. It functions in the pathway cofactor biosynthesis; NAD(+) biosynthesis; iminoaspartate from L-aspartate (oxidase route): step 1/1. Catalyzes the oxidation of L-aspartate to iminoaspartate, the first step in the de novo biosynthesis of NAD(+). This is L-aspartate oxidase from Acinetobacter baylyi (strain ATCC 33305 / BD413 / ADP1).